Consider the following 132-residue polypeptide: Large ribosomal subunit protein bL21 (132 aa).

Residues 104–132 (GKAPSIGPRPPREKKPVVETSAEADDAAA) form a disordered region.

The protein belongs to the bacterial ribosomal protein bL21 family. As to quaternary structure, part of the 50S ribosomal subunit. Contacts protein L20.

This protein binds to 23S rRNA in the presence of protein L20. The protein is Large ribosomal subunit protein bL21 of Rhodopseudomonas palustris (strain BisB18).